Here is a 216-residue protein sequence, read N- to C-terminus: ATP-dependent Clp protease proteolytic subunit (216 aa).

The active-site Nucleophile is the S101. The active site involves H126.

This sequence belongs to the peptidase S14 family. Component of the chloroplastic Clp protease core complex.

It localises to the plastid. It is found in the chloroplast stroma. The catalysed reaction is Hydrolysis of proteins to small peptides in the presence of ATP and magnesium. alpha-casein is the usual test substrate. In the absence of ATP, only oligopeptides shorter than five residues are hydrolyzed (such as succinyl-Leu-Tyr-|-NHMec, and Leu-Tyr-Leu-|-Tyr-Trp, in which cleavage of the -Tyr-|-Leu- and -Tyr-|-Trp bonds also occurs).. Its function is as follows. Cleaves peptides in various proteins in a process that requires ATP hydrolysis. Has a chymotrypsin-like activity. Plays a major role in the degradation of misfolded proteins. The polypeptide is ATP-dependent Clp protease proteolytic subunit (Oryza nivara (Indian wild rice)).